A 142-amino-acid chain; its full sequence is Large-conductance mechanosensitive channel (142 aa).

3 helical membrane passes run 15–35 (AFVM…GAAF), 38–58 (IVTS…IGNI), and 82–102 (GMFI…FVAI).

The protein belongs to the MscL family. Homopentamer.

The protein localises to the cell inner membrane. In terms of biological role, channel that opens in response to stretch forces in the membrane lipid bilayer. May participate in the regulation of osmotic pressure changes within the cell. The protein is Large-conductance mechanosensitive channel of Fusobacterium nucleatum subsp. nucleatum (strain ATCC 25586 / DSM 15643 / BCRC 10681 / CIP 101130 / JCM 8532 / KCTC 2640 / LMG 13131 / VPI 4355).